The following is a 446-amino-acid chain: UDP-N-acetylglucosamine--dolichyl-phosphate N-acetylglucosaminephosphotransferase (446 aa).

The next 2 membrane-spanning stretches (helical) occupy residues 1–21 (MIESCFNVGIWATGLALLMNQ) and 25–45 (PLLSNVGLSVLAYKATAMFIP). Residues 59 to 61 (KDM) and glutamate 71 contribute to the UDP-N-acetyl-alpha-D-glucosamine site. 2 consecutive transmembrane segments (helical) span residues 73 to 93 (MGAVSALVYFMCMIIFIPVLF) and 123 to 143 (LLGAYLSALLSILSVSLLGIL). Lysine 154 lines the dolichyl phosphate pocket. 2 consecutive transmembrane segments (helical) span residues 155–175 (FFLPAIAAIPLLVVYYVDYGV) and 191–211 (SLINLGFLYYFYMAAVAIFCP). A dolichyl phosphate-binding site is contributed by 208–216 (IFCPNSINI). Asparagine 215 contributes to the Mg(2+) binding site. 4 consecutive transmembrane segments (helical) span residues 216 to 236 (IIAGVNGVEAGQSLVLALVIA), 254 to 274 (AHLLSLYLVLPLIGVTAGLLK), 282 to 302 (VFVGDTFCYFAGMVMAVVGIL), and 311 to 331 (LFFIPQIFNFALSVPQLFGLV). Asparagine 221 contacts UDP-N-acetyl-alpha-D-glucosamine. Aspartate 286 lines the Mg(2+) pocket. 335 to 337 (RHR) lines the UDP-N-acetyl-alpha-D-glucosamine pocket. A glycan (N-linked (GlcNAc...) asparagine) is linked at asparagine 395. Residues 412 to 432 (DHLTICIMGLQLLTGIFGLII) traverse the membrane as a helical segment.

Belongs to the glycosyltransferase 4 family. Requires Mg(2+) as cofactor.

The protein resides in the endoplasmic reticulum membrane. It catalyses the reaction a di-trans,poly-cis-dolichyl phosphate + UDP-N-acetyl-alpha-D-glucosamine = an N-acetyl-alpha-D-glucosaminyl-diphospho-di-trans,poly-cis-dolichol + UMP. It functions in the pathway protein modification; protein glycosylation. Its activity is regulated as follows. Inhibited by natural nucleoside antibiotic tunicamycin, which acts as a structural analog and competitor of UDP-GlcNAc. Functionally, UDP-N-acetylglucosamine--dolichyl-phosphate N-acetylglucosaminephosphotransferase that operates in the biosynthetic pathway of dolichol-linked oligosaccharides, the glycan precursors employed in protein asparagine (N)-glycosylation. The assembly of dolichol-linked oligosaccharides begins on the cytosolic side of the endoplasmic reticulum membrane and finishes in its lumen. The sequential addition of sugars to dolichol pyrophosphate produces dolichol-linked oligosaccharides containing fourteen sugars, including two GlcNAcs, nine mannoses and three glucoses. Once assembled, the oligosaccharide is transferred from the lipid to nascent proteins by oligosaccharyltransferases. Catalyzes the initial step of dolichol-linked oligosaccharide biosynthesis, transfering GlcNAc-1-P from cytosolic UDP-GlcNAc onto the carrier lipid dolichyl phosphate (P-dolichol), yielding GlcNAc-P-P-dolichol embedded in the cytoplasmic leaflet of the endoplasmic reticulum membrane. The chain is UDP-N-acetylglucosamine--dolichyl-phosphate N-acetylglucosaminephosphotransferase (gpt2) from Schizosaccharomyces pombe (strain 972 / ATCC 24843) (Fission yeast).